The primary structure comprises 589 residues: Phenylalanine--tRNA ligase beta subunit (589 aa).

The region spanning L290–H368 is the B5 domain. 4 residues coordinate Mg(2+): D346, D352, E355, and D356.

This sequence belongs to the phenylalanyl-tRNA synthetase beta subunit family. Type 2 subfamily. In terms of assembly, tetramer of two alpha and two beta subunits. Mg(2+) is required as a cofactor.

It is found in the cytoplasm. It localises to the nucleus. The enzyme catalyses tRNA(Phe) + L-phenylalanine + ATP = L-phenylalanyl-tRNA(Phe) + AMP + diphosphate + H(+). This chain is Phenylalanine--tRNA ligase beta subunit (frs1), found in Schizosaccharomyces pombe (strain 972 / ATCC 24843) (Fission yeast).